Reading from the N-terminus, the 188-residue chain is dCTP deaminase (188 aa).

DCTP is bound by residues K111–R116, T135–E137, Q156, Y170, and Q180. E137 functions as the Proton donor/acceptor in the catalytic mechanism.

The protein belongs to the dCTP deaminase family. In terms of assembly, homotrimer.

The enzyme catalyses dCTP + H2O + H(+) = dUTP + NH4(+). It participates in pyrimidine metabolism; dUMP biosynthesis; dUMP from dCTP (dUTP route): step 1/2. Functionally, catalyzes the deamination of dCTP to dUTP. This chain is dCTP deaminase, found in Francisella tularensis subsp. tularensis (strain FSC 198).